Reading from the N-terminus, the 181-residue chain is 3-hydroxyacyl-[acyl-carrier-protein] dehydratase FabZ (181 aa).

Residue His54 is part of the active site.

The protein belongs to the thioester dehydratase family. FabZ subfamily.

The protein localises to the cytoplasm. It catalyses the reaction a (3R)-hydroxyacyl-[ACP] = a (2E)-enoyl-[ACP] + H2O. In terms of biological role, involved in unsaturated fatty acids biosynthesis. Catalyzes the dehydration of short chain beta-hydroxyacyl-ACPs and long chain saturated and unsaturated beta-hydroxyacyl-ACPs. The sequence is that of 3-hydroxyacyl-[acyl-carrier-protein] dehydratase FabZ from Yersinia pestis.